The chain runs to 306 residues: Ribonuclease BN (306 aa).

The Zn(2+) site is built by H64, H66, D68, H69, H141, D212, and H270. D68 acts as the Proton acceptor in catalysis.

Belongs to the RNase Z family. RNase BN subfamily. In terms of assembly, homodimer. Requires Zn(2+) as cofactor.

In terms of biological role, zinc phosphodiesterase, which has both exoribonuclease and endoribonuclease activities. The polypeptide is Ribonuclease BN (Klebsiella pneumoniae subsp. pneumoniae (strain ATCC 700721 / MGH 78578)).